Reading from the N-terminus, the 486-residue chain is Glutamate--tRNA ligase (486 aa).

The 'HIGH' region signature appears at 11-21 (PSPTGLLHIGN). The 'KMSKS' region motif lies at 255–259 (KLSKR). Position 258 (lysine 258) interacts with ATP.

This sequence belongs to the class-I aminoacyl-tRNA synthetase family. Glutamate--tRNA ligase type 1 subfamily. Monomer.

Its subcellular location is the cytoplasm. The catalysed reaction is tRNA(Glu) + L-glutamate + ATP = L-glutamyl-tRNA(Glu) + AMP + diphosphate. Its function is as follows. Catalyzes the attachment of glutamate to tRNA(Glu) in a two-step reaction: glutamate is first activated by ATP to form Glu-AMP and then transferred to the acceptor end of tRNA(Glu). This is Glutamate--tRNA ligase from Streptococcus pneumoniae (strain Hungary19A-6).